A 179-amino-acid polypeptide reads, in one-letter code: MINKNEWLTVGLITSCHGINGQVKVKSLSDFEERFLKPGMRWLQKENEPPSKIELISGFKQPGKETFIVKLQGINTRNDAEQLKTFKILVRTDKLPKLKKEEFHLLELINLEVKTLENDELKTIGKVINLENEKNNLLIIELFKNQKKVLIPFVKEIVPLVDIKNQFVIINPPNGLLEL.

The 77-residue stretch at 100–176 folds into the PRC barrel domain; that stretch reads KEEFHLLELI…FVIINPPNGL (77 aa).

Belongs to the RimM family. Binds ribosomal protein uS19.

It localises to the cytoplasm. In terms of biological role, an accessory protein needed during the final step in the assembly of 30S ribosomal subunit, possibly for assembly of the head region. Essential for efficient processing of 16S rRNA. May be needed both before and after RbfA during the maturation of 16S rRNA. It has affinity for free ribosomal 30S subunits but not for 70S ribosomes. This chain is Ribosome maturation factor RimM, found in Prochlorococcus marinus (strain MIT 9301).